A 414-amino-acid polypeptide reads, in one-letter code: Gamma-glutamyl phosphate reductase (414 aa).

Belongs to the gamma-glutamyl phosphate reductase family.

Its subcellular location is the cytoplasm. It carries out the reaction L-glutamate 5-semialdehyde + phosphate + NADP(+) = L-glutamyl 5-phosphate + NADPH + H(+). The protein operates within amino-acid biosynthesis; L-proline biosynthesis; L-glutamate 5-semialdehyde from L-glutamate: step 2/2. Its function is as follows. Catalyzes the NADPH-dependent reduction of L-glutamate 5-phosphate into L-glutamate 5-semialdehyde and phosphate. The product spontaneously undergoes cyclization to form 1-pyrroline-5-carboxylate. This Alkaliphilus metalliredigens (strain QYMF) protein is Gamma-glutamyl phosphate reductase.